Here is a 74-residue protein sequence, read N- to C-terminus: Amphipathic peptide CT1 (74 aa).

The N-terminal stretch at 1 to 23 (MKTQIVILFISMIMLQMFVQIEG) is a signal peptide. Val37 carries the valine amide modification. A propeptide spanning residues 41 to 74 (GLRNLDDLDDLDLDHLFDSDVSDADLRLLKQMFR) is cleaved from the precursor.

It belongs to the non-disulfide-bridged peptide (NDBP) superfamily. Short antimicrobial peptide (group 4) family. Expressed by the venom gland.

The protein localises to the secreted. Its subcellular location is the target cell membrane. Functionally, antimicrobial peptide that is rapidly bactericidal against Gram-positive bacteria (MIC=12.5 ug/ml against S.aureus, and MIC=100 ug/ml against M.luteus). Is also active against clinical antibiotics-resistant bacterial strains. In Scorpiops tibetanus (Scorpion), this protein is Amphipathic peptide CT1.